A 374-amino-acid chain; its full sequence is Queuine tRNA-ribosyltransferase (374 aa).

D95 functions as the Proton acceptor in the catalytic mechanism. Residues 95–99, D149, Q191, and G218 each bind substrate; that span reads DSGGF. Positions 249–255 are RNA binding; sequence GVGTYRE. Catalysis depends on D268, which acts as the Nucleophile. The tract at residues 273 to 277 is RNA binding; important for wobble base 34 recognition; that stretch reads TRWAR. Zn(2+) is bound by residues C306, C308, C311, and H337.

This sequence belongs to the queuine tRNA-ribosyltransferase family. In terms of assembly, homodimer. Within each dimer, one monomer is responsible for RNA recognition and catalysis, while the other monomer binds to the replacement base PreQ1. The cofactor is Zn(2+).

The enzyme catalyses 7-aminomethyl-7-carbaguanine + guanosine(34) in tRNA = 7-aminomethyl-7-carbaguanosine(34) in tRNA + guanine. The protein operates within tRNA modification; tRNA-queuosine biosynthesis. Catalyzes the base-exchange of a guanine (G) residue with the queuine precursor 7-aminomethyl-7-deazaguanine (PreQ1) at position 34 (anticodon wobble position) in tRNAs with GU(N) anticodons (tRNA-Asp, -Asn, -His and -Tyr). Catalysis occurs through a double-displacement mechanism. The nucleophile active site attacks the C1' of nucleotide 34 to detach the guanine base from the RNA, forming a covalent enzyme-RNA intermediate. The proton acceptor active site deprotonates the incoming PreQ1, allowing a nucleophilic attack on the C1' of the ribose to form the product. After dissociation, two additional enzymatic reactions on the tRNA convert PreQ1 to queuine (Q), resulting in the hypermodified nucleoside queuosine (7-(((4,5-cis-dihydroxy-2-cyclopenten-1-yl)amino)methyl)-7-deazaguanosine). In Nostoc sp. (strain PCC 7120 / SAG 25.82 / UTEX 2576), this protein is Queuine tRNA-ribosyltransferase.